A 330-amino-acid polypeptide reads, in one-letter code: Ketol-acid reductoisomerase (NADP(+)) (330 aa).

One can recognise a KARI N-terminal Rossmann domain in the interval 2-182 (VETFYEKDAD…GCTRAGVIKT (181 aa)). Residues 25–28 (YGSQ), lysine 48, serine 51, serine 53, and 83–86 (DEVQ) contribute to the NADP(+) site. Residue histidine 108 is part of the active site. Glycine 134 is a binding site for NADP(+). One can recognise a KARI C-terminal knotted domain in the interval 183–328 (TFKEETETDL…EKLRAMMPWI (146 aa)). Residues aspartate 191, glutamate 195, glutamate 227, and glutamate 231 each coordinate Mg(2+). Serine 252 contacts substrate.

Belongs to the ketol-acid reductoisomerase family. Mg(2+) is required as a cofactor.

It catalyses the reaction (2R)-2,3-dihydroxy-3-methylbutanoate + NADP(+) = (2S)-2-acetolactate + NADPH + H(+). It carries out the reaction (2R,3R)-2,3-dihydroxy-3-methylpentanoate + NADP(+) = (S)-2-ethyl-2-hydroxy-3-oxobutanoate + NADPH + H(+). It participates in amino-acid biosynthesis; L-isoleucine biosynthesis; L-isoleucine from 2-oxobutanoate: step 2/4. It functions in the pathway amino-acid biosynthesis; L-valine biosynthesis; L-valine from pyruvate: step 2/4. Its function is as follows. Involved in the biosynthesis of branched-chain amino acids (BCAA). Catalyzes an alkyl-migration followed by a ketol-acid reduction of (S)-2-acetolactate (S2AL) to yield (R)-2,3-dihydroxy-isovalerate. In the isomerase reaction, S2AL is rearranged via a Mg-dependent methyl migration to produce 3-hydroxy-3-methyl-2-ketobutyrate (HMKB). In the reductase reaction, this 2-ketoacid undergoes a metal-dependent reduction by NADPH to yield (R)-2,3-dihydroxy-isovalerate. The polypeptide is Ketol-acid reductoisomerase (NADP(+)) (Petrotoga mobilis (strain DSM 10674 / SJ95)).